We begin with the raw amino-acid sequence, 630 residues long: MRRLFAISSTGNRFVHRSLLGKGKCGTAPPSFSHCSFWVRDFSGVRYDYRKISINRLNDLKLDDAVNLFGDMVKSRPFPSIVEFSKLLSAIAKMNKFDLVISLGEQMQNLGISHNLYTYSILINCFCRRSQLSLALAVLAKMMKLGYEPDIVTLNSLLNGFCHGNRISDAVSLVGQMVEMGYQPDSFTFNTLIHGLFRHNRASEAVALVDRMVVKGCQPDLVTYGIVVNGLCKRGDIDLALSLLKKMEQGKIEPGVVIYNTIIDALCNYKNVNDALNLFTEMDNKGIRPNVVTYNSLIRCLCNYGRWSDASRLLSDMIERKINPNVVTFSALIDAFVKEGKLVEAEKLYDEMIKRSIDPDIFTYSSLINGFCMHDRLDEAKHMFELMISKDCFPNVVTYNTLIKGFCKAKRVDEGMELFREMSQRGLVGNTVTYTTLIHGFFQARECDNAQIVFKQMVSDGVLPDIMTYSILLDGLCNNGKVETALVVFEYLQRSKMEPDIYTYNIMIEGMCKAGKVEDGWDLFCSLSLKGVKPNVVTYTTMMSGFCRKGLKEEADALFREMKEEGPLPDSGTYNTLIRAHLRDGDKAASAELIREMRSCRFVGDASTIGLVTNMLHDGRLDKSFLKMLS.

Residues Met1–Lys22 constitute a mitochondrion transit peptide. 15 PPR repeats span residues Ser80–His114, Asn115–Pro149, Asp150–Pro184, Asp185–Pro219, Asp220–Pro254, Gly255–Pro289, Asn290–Pro324, Asn325–Pro359, Asp360–Pro394, Asn395–Gly429, Asn430–Pro464, Asp465–Pro499, Asp500–Pro534, Asn535–Pro569, and Asp570–Gly604.

It belongs to the PPR family. P subfamily.

It is found in the mitochondrion. The chain is Pentatricopeptide repeat-containing protein At1g63130, mitochondrial from Arabidopsis thaliana (Mouse-ear cress).